The following is a 512-amino-acid chain: Intermediate filament family orphan 2 (512 aa).

The IF rod domain maps to asparagine 50 to asparagine 479. The segment at lysine 473–serine 512 is disordered. Low complexity predominate over residues serine 480 to glycine 492. The segment covering glutamate 496–serine 512 has biased composition (acidic residues).

The protein belongs to the intermediate filament family.

This is Intermediate filament family orphan 2 (Iffo2) from Mus musculus (Mouse).